Here is a 611-residue protein sequence, read N- to C-terminus: Polyphenol oxidase 4 (611 aa).

Cu cation-binding residues include histidine 57, histidine 82, histidine 91, histidine 251, histidine 255, and histidine 283. A cross-link (2'-(S-cysteinyl)-histidine (Cys-His)) is located at residues 80-82 (CTH). A substrate-binding site is contributed by histidine 255. The propeptide at 380–611 (IKKSEGGKNP…GGLGALGRIF (232 aa)) is removed in mature form.

Belongs to the tyrosinase family. In terms of assembly, heterotetramer. Cu(2+) serves as cofactor. Post-translationally, the C-ter is probably cleaved after Gly-379 since the mature active protein is smaller than the protein encoded by the gene.

It catalyses the reaction 2 L-dopa + O2 = 2 L-dopaquinone + 2 H2O. The enzyme catalyses L-tyrosine + O2 = L-dopaquinone + H2O. In terms of biological role, copper-containing oxidase that catalyzes both the o-hydroxylation of monophenols and the subsequent oxidation of the resulting o-diphenols into reactive o-quinones, which evolve spontaneously to produce intermediates, which associate in dark brown pigments. Involved in the initial step of melanin synthesis. Melanins constitute a mechanism of defense and resistance to stress such as UV radiations, free radicals, gamma rays, dehydratation and extreme temperatures, and contribute to the fungal cell-wall resistance against hydrolytic enzymes in avoiding cellular lysis. Fungal pigments are also involved in the formation and stability of spores. In Agaricus bisporus (White button mushroom), this protein is Polyphenol oxidase 4 (PPO4).